A 727-amino-acid polypeptide reads, in one-letter code: Telomere repeats-binding bouquet formation protein 1 (727 aa).

2 ARM repeats span residues 101 to 144 (ELFE…RETG) and 339 to 382 (NGLP…GEYP). Residues 398–446 (ENNLEEHWRKAKEILHRIEQLEREGNEEEIQRENYQDNISSMNISIQNT) are a coiled coil. Basic and acidic residues predominate over residues 457–468 (RGSKAEDEDKSH). A disordered region spans residues 457-493 (RGSKAEDEDKSHSRQLQSYKSHGVMSKACTNDDQMKT). The segment at 523-662 (QNLHEETTFE…QRLSNESTTP (140 aa)) is interaction with TERF1. At Thr648 the chain carries Phosphothreonine. In terms of domain architecture, Myb-like spans 666–719 (KKRRIRKNFTEEEVNYLFNGVKKMGNHWNSILWSFPFQQGRKAVDLAHKYHKLT).

This sequence belongs to the TERB1 family. In terms of assembly, component of the MAJIN-TERB1-TERB2 complex, composed of MAJIN, TERB1 and TERB2. Interacts with TERF1, STAG3 and SUN1. Interacts (via Myb-like domain) with the cohesin complex; probably mediated via interaction with STAG3. Phosphorylated by CDK. Phosphorylation by CDK takes place in late prophase when the cap exchange is prominent. is important for the stabilization of telomere attachment but dispenable for the cap exchange.

It is found in the chromosome. The protein resides in the telomere. The protein localises to the nucleus inner membrane. Its function is as follows. Meiosis-specific telomere-associated protein involved in meiotic telomere attachment to the nucleus inner membrane, a crucial step for homologous pairing and synapsis. Component of the MAJIN-TERB1-TERB2 complex, which promotes telomere cap exchange by mediating attachment of telomeric DNA to the inner nuclear membrane and replacement of the protective cap of telomeric chromosomes: in early meiosis, the MAJIN-TERB1-TERB2 complex associates with telomeric DNA and the shelterin/telosome complex. During prophase, the complex matures and promotes release of the shelterin/telosome complex from telomeric DNA. In the MAJIN-TERB1-TERB2 complex, TERB1 probably mediates association with the shelterin/telosome complex via interaction with TERF1, promoting priming telomeric DNA attachment'. Promotes telomere association with the nuclear envelope and deposition of the SUN-KASH/LINC complex. Also recruits cohesin to telomeres to develop structural rigidity. The chain is Telomere repeats-binding bouquet formation protein 1 from Homo sapiens (Human).